Here is a 316-residue protein sequence, read N- to C-terminus: Phosphate acyltransferase (316 aa).

This sequence belongs to the PlsX family. Homodimer. Probably interacts with PlsY.

The protein resides in the cytoplasm. It catalyses the reaction a fatty acyl-[ACP] + phosphate = an acyl phosphate + holo-[ACP]. Its pathway is lipid metabolism; phospholipid metabolism. Catalyzes the reversible formation of acyl-phosphate (acyl-PO(4)) from acyl-[acyl-carrier-protein] (acyl-ACP). This enzyme utilizes acyl-ACP as fatty acyl donor, but not acyl-CoA. This is Phosphate acyltransferase from Chlamydia caviae (strain ATCC VR-813 / DSM 19441 / 03DC25 / GPIC) (Chlamydophila caviae).